Here is a 426-residue protein sequence, read N- to C-terminus: tRNA (guanine(37)-N(1))-methyltransferase (426 aa).

Residues histidine 203, 242–243 (DL), 269–270 (DA), and asparagine 292 each bind S-adenosyl-L-methionine. Residues 374–426 (RISFKMPTLKKRKDTENNDDQENNNNSSNNNNNNKIDYNEAVSSGGEGKKIKH) are disordered. Over residues 396-407 (NNNNSSNNNNNN) the composition is skewed to low complexity.

This sequence belongs to the class I-like SAM-binding methyltransferase superfamily. TRM5/TYW2 family. Monomer.

It localises to the mitochondrion matrix. The protein resides in the nucleus. It is found in the cytoplasm. The catalysed reaction is guanosine(37) in tRNA + S-adenosyl-L-methionine = N(1)-methylguanosine(37) in tRNA + S-adenosyl-L-homocysteine + H(+). In terms of biological role, specifically methylates the N1 position of guanosine-37 in various cytoplasmic and mitochondrial tRNAs. Methylation is not dependent on the nature of the nucleoside 5' of the target nucleoside. This is the first step in the biosynthesis of wybutosine (yW), a modified base adjacent to the anticodon of tRNAs and required for accurate decoding. This Heterostelium pallidum (strain ATCC 26659 / Pp 5 / PN500) (Cellular slime mold) protein is tRNA (guanine(37)-N(1))-methyltransferase (trmt5).